A 514-amino-acid chain; its full sequence is AAA-ATPase ASD, mitochondrial (514 aa).

A helical membrane pass occupies residues 7-24 (VWTNTGSALASLVFIYTI). Position 250–257 (250–257 (GPPGTGKS)) interacts with ATP. 2 disordered regions span residues 311-342 (GQRKQKKDEEEDEDETSPIEKQMKKDQGENKG) and 467-514 (KEEA…TMKD). Composition is skewed to basic and acidic residues over residues 331–342 (KQMKKDQGENKG) and 467–502 (KEEAKRRIEDEEKKKKEEEEIKRKKREEKKIKKEEK).

This sequence belongs to the AAA ATPase family. BCS1 subfamily. The cofactor is Mg(2+). Expressed in seeds, specifically in the embryo.

It is found in the mitochondrion membrane. It catalyses the reaction ATP + H2O = ADP + phosphate + H(+). In terms of biological role, required to regulate morphology and anatomy during seed maturation. This is AAA-ATPase ASD, mitochondrial (AATP1) from Arabidopsis thaliana (Mouse-ear cress).